The primary structure comprises 317 residues: Methionyl-tRNA formyltransferase (317 aa).

Position 112-115 (112-115) interacts with (6S)-5,6,7,8-tetrahydrofolate; it reads SLLP.

This sequence belongs to the Fmt family.

It carries out the reaction L-methionyl-tRNA(fMet) + (6R)-10-formyltetrahydrofolate = N-formyl-L-methionyl-tRNA(fMet) + (6S)-5,6,7,8-tetrahydrofolate + H(+). Its function is as follows. Attaches a formyl group to the free amino group of methionyl-tRNA(fMet). The formyl group appears to play a dual role in the initiator identity of N-formylmethionyl-tRNA by promoting its recognition by IF2 and preventing the misappropriation of this tRNA by the elongation apparatus. The polypeptide is Methionyl-tRNA formyltransferase (Mycobacterium avium (strain 104)).